The chain runs to 191 residues: Adenylate kinase (191 aa).

Glycine 10–threonine 15 contributes to the ATP binding site. Residues serine 30–valine 59 form an NMP region. AMP contacts are provided by residues threonine 31, arginine 36, glutamate 57–valine 59, glycine 83–arginine 86, and glutamine 90. The segment at asparagine 124–aspartate 140 is LID. Position 125 (arginine 125) interacts with ATP. AMP contacts are provided by arginine 137 and arginine 148. Glycine 176 provides a ligand contact to ATP.

It belongs to the adenylate kinase family. Monomer.

The protein localises to the cytoplasm. The catalysed reaction is AMP + ATP = 2 ADP. It functions in the pathway purine metabolism; AMP biosynthesis via salvage pathway; AMP from ADP: step 1/1. Functionally, catalyzes the reversible transfer of the terminal phosphate group between ATP and AMP. Plays an important role in cellular energy homeostasis and in adenine nucleotide metabolism. This chain is Adenylate kinase, found in Jannaschia sp. (strain CCS1).